A 193-amino-acid chain; its full sequence is Putative 3-methyladenine DNA glycosylase (193 aa).

The protein belongs to the DNA glycosylase MPG family.

The protein is Putative 3-methyladenine DNA glycosylase of Francisella tularensis subsp. tularensis (strain FSC 198).